A 174-amino-acid chain; its full sequence is Peptide methionine sulfoxide reductase MsrA (174 aa).

Cys-10 is an active-site residue.

This sequence belongs to the MsrA Met sulfoxide reductase family.

It catalyses the reaction L-methionyl-[protein] + [thioredoxin]-disulfide + H2O = L-methionyl-(S)-S-oxide-[protein] + [thioredoxin]-dithiol. The catalysed reaction is [thioredoxin]-disulfide + L-methionine + H2O = L-methionine (S)-S-oxide + [thioredoxin]-dithiol. Has an important function as a repair enzyme for proteins that have been inactivated by oxidation. Catalyzes the reversible oxidation-reduction of methionine sulfoxide in proteins to methionine. The protein is Peptide methionine sulfoxide reductase MsrA of Pseudarthrobacter chlorophenolicus (strain ATCC 700700 / DSM 12829 / CIP 107037 / JCM 12360 / KCTC 9906 / NCIMB 13794 / A6) (Arthrobacter chlorophenolicus).